Reading from the N-terminus, the 103-residue chain is Cyclotide vitri-A (103 aa).

The N-terminal stretch at 1 to 9 (AAFALPAFA) is a signal peptide. Positions 10–69 (SFEKDVITPAALEAVLNRKAPLSNIMMENDAIVNVIANVKTVISNPVLEEALLKTNHGVN) are excised as a propeptide. Residues 70-99 (GIPCGESCVWIPCITSAIGCSCKSKVCYRN) constitute a cross-link (cyclopeptide (Gly-Asn)). Cystine bridges form between Cys-73–Cys-89, Cys-77–Cys-91, and Cys-82–Cys-96. Positions 100–103 (SLDN) are excised as a propeptide.

This is a cyclic peptide.

Its function is as follows. Probably participates in a plant defense mechanism. The polypeptide is Cyclotide vitri-A (Viola biflora (Yellow wood violet)).